The chain runs to 153 residues: UPF0756 membrane protein NT01CX_1209 (153 aa).

4 consecutive transmembrane segments (helical) span residues 5–25, 45–65, 83–103, and 113–133; these read IILLILMFLSFISKNKSLGIA, ENHFMNLGMTFLMIWMLIPII, IVCFLCGAIVAVLASKGVGFL, and IILGSIVGVSLLGGVPVGPLI.

The protein belongs to the UPF0756 family.

The protein localises to the cell membrane. This chain is UPF0756 membrane protein NT01CX_1209, found in Clostridium novyi (strain NT).